We begin with the raw amino-acid sequence, 743 residues long: Ribosome biogenesis protein BOP1 homolog (743 aa).

WD repeat units follow at residues 365–404, 575–615, 617–655, 659–701, and 712–743; these read GHTATVRSVSVSPNGQYLATGCDDHLVRVYEVQTGRLMKR, KFSE…RRFK, SGGVTTCLSIHPEGDNFLVGDTTSHTSWFDMDFSDKPYK, SHKG…DYNK, and KHQRSVYAVAWHPSLAWLFTSTEDGVVTAWTE.

It belongs to the WD repeat BOP1/ERB1 family.

The protein resides in the nucleus. Its subcellular location is the nucleolus. The protein localises to the nucleoplasm. Functionally, required for maturation of ribosomal RNAs and formation of the large ribosomal subunit. The sequence is that of Ribosome biogenesis protein BOP1 homolog from Leishmania braziliensis.